Reading from the N-terminus, the 122-residue chain is Large ribosomal subunit protein uL14c (122 aa).

Belongs to the universal ribosomal protein uL14 family. As to quaternary structure, part of the 50S ribosomal subunit.

The protein localises to the plastid. It is found in the chloroplast. Functionally, binds to 23S rRNA. In Dioscorea elephantipes (Elephant's foot yam), this protein is Large ribosomal subunit protein uL14c.